A 475-amino-acid polypeptide reads, in one-letter code: Sensor histidine kinase QseE (475 aa).

Residues 1–13 are Cytoplasmic-facing; that stretch reads MKRWPVFPRSLRQ. The helical transmembrane segment at 14 to 34 threads the bilayer; it reads LVMLAFLLILLPLLVLAWQAW. The Periplasmic portion of the chain corresponds to 35–173; the sequence is QSLNALSDQA…LQREIAERGQ (139 aa). A helical membrane pass occupies residues 174 to 194; the sequence is YFGWQSLVLFLVSLVMVLLFT. Residues 195–475 are Cytoplasmic-facing; sequence RMIIGPVKNI…IELPSSKNTK (281 aa). In terms of domain architecture, Histidine kinase spans 256 to 472; sequence HLSHELKTPL…CFRIELPSSK (217 aa). H259 carries the phosphohistidine; by autocatalysis modification.

In terms of processing, autophosphorylated.

The protein resides in the cell inner membrane. It catalyses the reaction ATP + protein L-histidine = ADP + protein N-phospho-L-histidine.. In terms of biological role, member of the two-component regulatory system QseF/QseE involved in the regulation of virulence and metabolism in EHEC. Required for pedestal formation in host epithelial cells during infection. Autophosphorylates in response to epinephrine, sulfate or phosphate and then probably transfers its phosphate group to QseF. This chain is Sensor histidine kinase QseE (qseE), found in Escherichia coli O157:H7.